We begin with the raw amino-acid sequence, 721 residues long: Kinesin-like protein KIF2C (721 aa).

Positions 1–250 (MESLHARLFP…CSPLTVTDPI (250 aa)) are globular. Phosphoserine occurs at positions 3 and 19. Ser-92 is subject to Phosphoserine; by AURKB. The Microtubule tip localization signal motif lies at 95–98 (SKIP). 7 positions are modified to phosphoserine: Ser-106, Ser-108, Ser-112, Ser-162, Ser-171, Ser-183, and Ser-188. Residues 164 to 188 (EAEEQAHSTRSTSSANPGNSVRRKS) form a disordered region. The segment covering 171-182 (STRSTSSANPGN) has biased composition (polar residues). A negative regulator of microtubule-binding region spans residues 203–234 (EKRAQNSELRIKRAQEYDSSFPNWEFARMIKE). Residues 254-584 (RICVCVRKRP…LRYADRVKEL (331 aa)) form the Kinesin motor domain. Residues Arg-260 and 344-351 (GQTGSGKT) contribute to the ATP site. Phosphoserine is present on residues Ser-515 and Ser-626. The stretch at 614-652 (GNEEEELSSQMSSFNEAMTQIRELEERALEELREIIQQG) forms a coiled coil.

The protein belongs to the TRAFAC class myosin-kinesin ATPase superfamily. Kinesin family. MCAK/KIF2 subfamily. Interacts with CENPH. Interacts with MTUS2/TIP150; the interaction is direct. Interacts with MAPRE1; the interaction is direct, regulated by phosphorylation and is probably required for targeting to growing microtubule plus ends. Interacts with KIF18B at microtubule tips; this interaction increases the affinity of both partners for microtubule plus ends and is required for robust microtubule depolymerization. Phosphorylation by AURKA or AURKB strongly reduces KIF18B-binding. Post-translationally, phosphorylation by AURKB, regulates association with centromeres and kinetochores and the microtubule depolymerization activity. Ubiquitinated.

Its subcellular location is the cytoplasm. The protein localises to the cytoskeleton. It is found in the nucleus. The protein resides in the chromosome. It localises to the centromere. Its subcellular location is the kinetochore. Its function is as follows. In complex with KIF18B, constitutes the major microtubule plus-end depolymerizing activity in mitotic cells. Regulates the turnover of microtubules at the kinetochore and functions in chromosome segregation during mitosis. Plays a role in chromosome congression and is required for the lateral to end-on conversion of the chromosome-microtubule attachment. The polypeptide is Kinesin-like protein KIF2C (Kif2c) (Mus musculus (Mouse)).